The following is a 340-amino-acid chain: MVNVLINGYGSIGKRVADAVAKQDDMKVIGVTKTKPDFEARMAVEKGYKLFAAIPERKHLFEEAGIPVEGTLDDIIEDADIVVDGAPKKIGKANLENVYKKHGVKAILQGGEKAGDAQDSFNSLWSYDRCYGKDYIRLVSCNTTGLCRSMYAINSVADILKARIVLIRRAADPNDIKTGPVNAIVPNPVTVPSHHGPDVVSVIPQLDGKIMTSAVIVPTTLMHMHSIMVETSGTNRDEIIDALAKTPRILTLKASEGFDSTAKIIEYSRDLGRSRYDLNEIAVWEESVNVVDNEVYMMQAIHQESDVIPENVDCIRAMLEMESDNLKSIEKTNKAMGLIK.

NAD(+) contacts are provided by residues 11–12 and Gly111; that span reads SI. Residue 140–142 coordinates D-glyceraldehyde 3-phosphate; the sequence is SCN. Residue Cys141 is the Nucleophile of the active site. Residue Arg169 coordinates NAD(+). D-glyceraldehyde 3-phosphate is bound at residue 195–196; the sequence is HG. Gln303 is a binding site for NAD(+).

It belongs to the glyceraldehyde-3-phosphate dehydrogenase family. Homotetramer.

The protein localises to the cytoplasm. It carries out the reaction D-glyceraldehyde 3-phosphate + phosphate + NADP(+) = (2R)-3-phospho-glyceroyl phosphate + NADPH + H(+). It catalyses the reaction D-glyceraldehyde 3-phosphate + phosphate + NAD(+) = (2R)-3-phospho-glyceroyl phosphate + NADH + H(+). It participates in carbohydrate degradation; glycolysis; pyruvate from D-glyceraldehyde 3-phosphate: step 1/5. This Methanococcus maripaludis (strain C5 / ATCC BAA-1333) protein is Glyceraldehyde-3-phosphate dehydrogenase.